A 264-amino-acid chain; its full sequence is Mannose-specific lectin CEA (264 aa).

The first 23 residues, 1-23 (MAKLLLFLLPAILGLLVPRSAVA), serve as a signal peptide directing secretion. Bulb-type lectin domains lie at 26–131 (TNYL…PWVP) and 145–252 (NNLL…PQAK). Beta-D-mannose contacts are provided by residues 51–55 (QDDCN), Tyr59, Trp63, Gln64, 170–174 (QGDCN), Tyr178, and 182–185 (YGWQ). The short motif at 51-59 (QDDCNLVLY) is the Carbohydrate-binding motif 1 element. 2 disulfide bridges follow: Cys54–Cys74 and Cys173–Cys195. Residues 170-178 (QGDCNLVLY) carry the Carbohydrate-binding motif 2 motif.

Forms heterotetramer of 2 chains 1 and 2 chains 2 arranged as a dimer of chain 1 and chain 2 heterodimers.

The protein resides in the secreted. Mannose-specific lectin. Shows agglutinating activity towards erythrocytes from rabbit. Has insecticidal activity against cotton aphids and other hemipteran insects. The chain is Mannose-specific lectin CEA from Colocasia esculenta (Wild taro).